Consider the following 408-residue polypeptide: Serine/threonine transporter SstT (408 aa).

10 helical membrane passes run 15–35 (MGLIPQITIGIIAGVLLAVIW), 49–69 (FISALKAVAPILVFALVTAAI), 85–105 (LLYVIGTLVAAVVAVIASFVF), 142–162 (ALMEGNFIAILAWAVGLGLML), 192–212 (PLGIFGLVANTLADAGIGALL), 218–238 (LAVIVGCMLFVALVTNPLIVF), 246–268 (YPLVFACLRGSAITAFFTRSSAA), 289–309 (ISIPLGATINMAGAAITISVI), 317–337 (LGIPVDFPTALLLCVVSSIAA), and 362–382 (TEVAMQVVAIGFVISVVQDST).

It belongs to the dicarboxylate/amino acid:cation symporter (DAACS) (TC 2.A.23) family.

It is found in the cell inner membrane. It carries out the reaction L-serine(in) + Na(+)(in) = L-serine(out) + Na(+)(out). The enzyme catalyses L-threonine(in) + Na(+)(in) = L-threonine(out) + Na(+)(out). Involved in the import of serine and threonine into the cell, with the concomitant import of sodium (symport system). The chain is Serine/threonine transporter SstT from Marinobacter nauticus (strain ATCC 700491 / DSM 11845 / VT8) (Marinobacter aquaeolei).